Consider the following 463-residue polypeptide: D-inositol 3-phosphate glycosyltransferase (463 aa).

Histidine 40 contributes to the 1D-myo-inositol 3-phosphate binding site. UDP-N-acetyl-alpha-D-glucosamine contacts are provided by residues 46 to 47 and glycine 54; that span reads QP. 1D-myo-inositol 3-phosphate is bound by residues 51–56, lysine 109, tyrosine 142, threonine 166, and arginine 186; that span reads DAGGMN. 3 residues coordinate UDP-N-acetyl-alpha-D-glucosamine: arginine 260, lysine 265, and glutamine 318. Phenylalanine 327, histidine 328, and valine 330 together coordinate Mg(2+). UDP-N-acetyl-alpha-D-glucosamine contacts are provided by glutamate 340 and glutamate 348. Threonine 354 is a Mg(2+) binding site. Positions 443–463 are disordered; that stretch reads VRDPVAARKPRRWTARRGVGA.

It belongs to the glycosyltransferase group 1 family. MshA subfamily. Homodimer.

It catalyses the reaction 1D-myo-inositol 3-phosphate + UDP-N-acetyl-alpha-D-glucosamine = 1D-myo-inositol 2-acetamido-2-deoxy-alpha-D-glucopyranoside 3-phosphate + UDP + H(+). Its function is as follows. Catalyzes the transfer of a N-acetyl-glucosamine moiety to 1D-myo-inositol 3-phosphate to produce 1D-myo-inositol 2-acetamido-2-deoxy-glucopyranoside 3-phosphate in the mycothiol biosynthesis pathway. This is D-inositol 3-phosphate glycosyltransferase from Mycobacterium ulcerans (strain Agy99).